We begin with the raw amino-acid sequence, 627 residues long: Chaperone protein DnaK (627 aa).

T197 is modified (phosphothreonine; by autocatalysis). Positions 602–611 are enriched in polar residues; sequence ENQHSEANTV. The segment at 602–627 is disordered; that stretch reads ENQHSEANTVNDEKVVDADFQDVDKK. A compositionally biased stretch (basic and acidic residues) spans 612–627; the sequence is NDEKVVDADFQDVDKK.

The protein belongs to the heat shock protein 70 family.

In terms of biological role, acts as a chaperone. This chain is Chaperone protein DnaK, found in Rickettsia felis (strain ATCC VR-1525 / URRWXCal2) (Rickettsia azadi).